A 380-amino-acid chain; its full sequence is Lipid-A-disaccharide synthase (380 aa).

The protein belongs to the LpxB family.

It carries out the reaction a lipid X + a UDP-2-N,3-O-bis[(3R)-3-hydroxyacyl]-alpha-D-glucosamine = a lipid A disaccharide + UDP + H(+). It participates in bacterial outer membrane biogenesis; LPS lipid A biosynthesis. In terms of biological role, condensation of UDP-2,3-diacylglucosamine and 2,3-diacylglucosamine-1-phosphate to form lipid A disaccharide, a precursor of lipid A, a phosphorylated glycolipid that anchors the lipopolysaccharide to the outer membrane of the cell. The sequence is that of Lipid-A-disaccharide synthase from Francisella tularensis subsp. tularensis (strain FSC 198).